The sequence spans 254 residues: Imidazole glycerol phosphate synthase subunit HisF (254 aa).

Residues aspartate 13 and aspartate 132 contribute to the active site.

It belongs to the HisA/HisF family. In terms of assembly, heterodimer of HisH and HisF.

It localises to the cytoplasm. It catalyses the reaction 5-[(5-phospho-1-deoxy-D-ribulos-1-ylimino)methylamino]-1-(5-phospho-beta-D-ribosyl)imidazole-4-carboxamide + L-glutamine = D-erythro-1-(imidazol-4-yl)glycerol 3-phosphate + 5-amino-1-(5-phospho-beta-D-ribosyl)imidazole-4-carboxamide + L-glutamate + H(+). It participates in amino-acid biosynthesis; L-histidine biosynthesis; L-histidine from 5-phospho-alpha-D-ribose 1-diphosphate: step 5/9. Its function is as follows. IGPS catalyzes the conversion of PRFAR and glutamine to IGP, AICAR and glutamate. The HisF subunit catalyzes the cyclization activity that produces IGP and AICAR from PRFAR using the ammonia provided by the HisH subunit. This is Imidazole glycerol phosphate synthase subunit HisF from Wolinella succinogenes (strain ATCC 29543 / DSM 1740 / CCUG 13145 / JCM 31913 / LMG 7466 / NCTC 11488 / FDC 602W) (Vibrio succinogenes).